The sequence spans 230 residues: Pyridoxal phosphate homeostasis protein (230 aa).

The residue at position 36 (lysine 36) is an N6-(pyridoxal phosphate)lysine.

It belongs to the pyridoxal phosphate-binding protein YggS/PROSC family.

Perhaps involved in proline biosynthesis. Its function is as follows. Pyridoxal 5'-phosphate (PLP)-binding protein, which is involved in PLP homeostasis. The sequence is that of Pyridoxal phosphate homeostasis protein from Pseudomonas aeruginosa (strain ATCC 15692 / DSM 22644 / CIP 104116 / JCM 14847 / LMG 12228 / 1C / PRS 101 / PAO1).